The following is a 424-amino-acid chain: Histidine--tRNA ligase (424 aa).

This sequence belongs to the class-II aminoacyl-tRNA synthetase family. In terms of assembly, homodimer.

The protein resides in the cytoplasm. The enzyme catalyses tRNA(His) + L-histidine + ATP = L-histidyl-tRNA(His) + AMP + diphosphate + H(+). This is Histidine--tRNA ligase from Staphylococcus epidermidis (strain ATCC 12228 / FDA PCI 1200).